The following is a 165-amino-acid chain: Zinc finger C2H2 protein ECU11_0990 (165 aa).

Basic and acidic residues-rich tracts occupy residues 1-10 and 19-32; these read MEAESPKERV and DPERGVKEREDTSS. Residues 1–38 form a disordered region; it reads MEAESPKERVQGVSGESWDPERGVKEREDTSSKKGKGV. 2 C2H2-type zinc fingers span residues 103–125 and 136–158; these read FGCESCEEVFDSFKKLQLHKAQH and LFCPVCKKTFDEKRKLMLHSRYH.

This chain is Zinc finger C2H2 protein ECU11_0990, found in Encephalitozoon cuniculi (strain GB-M1) (Microsporidian parasite).